A 101-amino-acid chain; its full sequence is NAD(P)H-quinone oxidoreductase subunit 4L, chloroplastic (101 aa).

3 consecutive transmembrane segments (helical) span residues 2-22, 32-52, and 61-81; these read MLEY…YGLI, MCLE…SDFF, and IFSI…PAIV.

This sequence belongs to the complex I subunit 4L family. NDH is composed of at least 16 different subunits, 5 of which are encoded in the nucleus.

It is found in the plastid. It localises to the chloroplast thylakoid membrane. The enzyme catalyses a plastoquinone + NADH + (n+1) H(+)(in) = a plastoquinol + NAD(+) + n H(+)(out). It catalyses the reaction a plastoquinone + NADPH + (n+1) H(+)(in) = a plastoquinol + NADP(+) + n H(+)(out). Its function is as follows. NDH shuttles electrons from NAD(P)H:plastoquinone, via FMN and iron-sulfur (Fe-S) centers, to quinones in the photosynthetic chain and possibly in a chloroplast respiratory chain. The immediate electron acceptor for the enzyme in this species is believed to be plastoquinone. Couples the redox reaction to proton translocation, and thus conserves the redox energy in a proton gradient. This Populus trichocarpa (Western balsam poplar) protein is NAD(P)H-quinone oxidoreductase subunit 4L, chloroplastic.